The following is an 80-amino-acid chain: MSRICQITRKKSMKGNSVAHSNHKTRRKFNVNFFSKRFYWVEKDCWIKLNISANGLRTINKIGLDAAIKQASKKGYLIIQ.

Positions 1–21 are disordered; that stretch reads MSRICQITRKKSMKGNSVAHS.

Belongs to the bacterial ribosomal protein bL28 family.

In Azobacteroides pseudotrichonymphae genomovar. CFP2, this protein is Large ribosomal subunit protein bL28.